The chain runs to 512 residues: Probable pectinesterase/pectinesterase inhibitor 54 (512 aa).

Residues 1-24 (MGVIDMVLFWVLLVNALLIVDASS) form the signal peptide. A pectinesterase inhibitor 54 region spans residues 29–193 (FAYQNEMQRH…SRLVSNSLTL (165 aa)). Residues N71 and N131 are each glycosylated (N-linked (GlcNAc...) asparagine). The pectinesterase 54 stretch occupies residues 229–496 (HVVVAKDGSG…FSVVKRRNGE (268 aa)). Substrate is bound at residue Q302. D325 acts as the Proton donor; for pectinesterase activity in catalysis. C339 and C359 are disulfide-bonded. The active-site Nucleophile; for pectinesterase activity is the D346. R415 and W417 together coordinate substrate.

In the N-terminal section; belongs to the PMEI family. The protein in the C-terminal section; belongs to the pectinesterase family. As to expression, expressed in siliques.

The protein localises to the secreted. It localises to the cell wall. It carries out the reaction [(1-&gt;4)-alpha-D-galacturonosyl methyl ester](n) + n H2O = [(1-&gt;4)-alpha-D-galacturonosyl](n) + n methanol + n H(+). It participates in glycan metabolism; pectin degradation; 2-dehydro-3-deoxy-D-gluconate from pectin: step 1/5. In terms of biological role, acts in the modification of cell walls via demethylesterification of cell wall pectin. The chain is Probable pectinesterase/pectinesterase inhibitor 54 (PME54) from Arabidopsis thaliana (Mouse-ear cress).